A 1151-amino-acid chain; its full sequence is Zinc finger protein ZFPM2 (1151 aa).

Basic residues predominate over residues 1–13 (MSRRKQSKPRQIK). Residues 1–102 (MSRRKQSKPR…ETDDWDGPGE (102 aa)) are disordered. 2 stretches are compositionally biased toward acidic residues: residues 18–33 (DAIEDEEEECPSEETD) and 70–82 (EGIQETAESDGDT). The segment at 244–277 (IVNKDIFPCKSCGIWYRSERNLQAHLMYYCSGRQ) adopts a CCHC FOG-type 1 zinc-finger fold. 4 residues coordinate Zn(2+): Cys252, Cys255, His268, and Cys273. Residues 296–320 (SLCPFPQCTKSFSNARALEMHLNSH) form a C2H2-type 1 zinc finger. Residue Lys324 forms a Glycyl lysine isopeptide (Lys-Gly) (interchain with G-Cter in SUMO1) linkage. 2 consecutive C2H2-type zinc fingers follow at residues 335-357 (LKCTVCSYTADSVINFHQHLFSH) and 363-385 (FRCNHCHFGFQTQRELLQHQELH). The segment at 389–487 (GKLPRESDME…RLASSPVQPN (99 aa)) is disordered. 2 stretches are compositionally biased toward polar residues: residues 401-410 (PSATEDSLQP) and 419-431 (ELPQSQKAMQTKD). Lys444 is covalently cross-linked (Glycyl lysine isopeptide (Lys-Gly) (interchain with G-Cter in SUMO2)). Positions 447 to 485 (LFLTNQRPEIQPTTNKQSFSYTKIKSEPSSPRLASSPVQ) are enriched in polar residues. Residue Lys471 forms a Glycyl lysine isopeptide (Lys-Gly) (interchain with G-Cter in SUMO1) linkage. Ser532 is subject to Phosphoserine. Residues 542–575 (PLMPKGATCFECNITFNNLDNYLVHKKHYCSSRW) form a CCHC FOG-type 2 zinc finger. Zn(2+)-binding residues include Cys550, Cys553, His566, and Cys571. Position 581 is a phosphoserine (Ser581). The disordered stretch occupies residues 636-683 (GPNGKGHDKDFSTQTKKLSTSSNNDDKINGKPVDVKNPSVPLVDGESD). The segment covering 647-658 (STQTKKLSTSSN) has biased composition (polar residues). The CCHC FOG-type 3 zinc-finger motif lies at 681–714 (ESDPNKTTCEACNITFSRHETYMVHKQYYCATRH). Zn(2+) is bound by residues Cys689, Cys692, His705, and Cys710. The Nuclear localization signal signature appears at 736–740 (RKRRK). The segment at 829 to 835 (PIDLSKK) is interaction with CTBP2. The CCHC FOG-type 4 zinc-finger motif lies at 848-881 (KRLLDYHECTVCKISFNKVENYLAHKQNFCPVTA). Zn(2+)-binding residues include Cys856, Cys859, His872, and Cys877. Residue Ser904 is modified to Phosphoserine. Residues Lys915 and Lys955 each participate in a glycyl lysine isopeptide (Lys-Gly) (interchain with G-Cter in SUMO1) cross-link. Residue Ser1014 is modified to Phosphoserine. The segment at 1051 to 1095 (DERPAANPQQENISQNPQHEDDHKSPSWISENPLAANENVSPGIP) is disordered. Polar residues predominate over residues 1057–1067 (NPQQENISQNP). Residues 1113 to 1146 (QAPTSGKYCRLCDIQFNNLSNFITHKKFYCSSHA) form a CCHC FOG-type 5 zinc finger. Zn(2+) contacts are provided by Cys1121, Cys1124, His1137, and Cys1142.

This sequence belongs to the FOG (Friend of GATA) family. Interacts with the N-terminal zinc-finger of GATA4, GATA5 and probably GATA6. Interacts with retinoid nuclear receptor RXRA when ligand bound. Interacts with corepressor CTBP2; this interaction is however not essential for corepressor activity. Able to bind GATA1 in vitro. Interacts with NR2F2 and NR2F6. Interacts with ATOH8; mediates indirect interaction with GATA4. Post-translationally, sumoylation reduces transcriptional repression activity. As to expression, widely expressed at low level.

It is found in the nucleus. Functionally, transcription regulator that plays a central role in heart morphogenesis and development of coronary vessels from epicardium, by regulating genes that are essential during cardiogenesis. Essential cofactor that acts via the formation of a heterodimer with transcription factors of the GATA family GATA4, GATA5 and GATA6. Such heterodimer can both activate or repress transcriptional activity, depending on the cell and promoter context. Also required in gonadal differentiation, possibly be regulating expression of SRY. Probably acts a corepressor of NR2F2. In Homo sapiens (Human), this protein is Zinc finger protein ZFPM2 (ZFPM2).